Reading from the N-terminus, the 209-residue chain is Small ribosomal subunit protein uS4 (209 aa).

One can recognise an S4 RNA-binding domain in the interval 98-159; it reads RRLDSAVYRL…KSRKITRIND (62 aa).

This sequence belongs to the universal ribosomal protein uS4 family. In terms of assembly, part of the 30S ribosomal subunit. Contacts protein S5. The interaction surface between S4 and S5 is involved in control of translational fidelity.

Its function is as follows. One of the primary rRNA binding proteins, it binds directly to 16S rRNA where it nucleates assembly of the body of the 30S subunit. Functionally, with S5 and S12 plays an important role in translational accuracy. The chain is Small ribosomal subunit protein uS4 from Syntrophotalea carbinolica (strain DSM 2380 / NBRC 103641 / GraBd1) (Pelobacter carbinolicus).